The sequence spans 111 residues: Large ribosomal subunit protein eL33z (111 aa).

It belongs to the eukaryotic ribosomal protein eL33 family.

In Arabidopsis thaliana (Mouse-ear cress), this protein is Large ribosomal subunit protein eL33z (RPL35AB).